Here is a 352-residue protein sequence, read N- to C-terminus: C-C chemokine receptor type 5 (352 aa).

The Extracellular portion of the chain corresponds to 1–30 (MDYQVSSPTYDIDYYTSEPCQKINVKQIAA). Y3 is modified (sulfotyrosine). O-linked (GalNAc...) serine glycosylation is found at S6 and S7. A sulfotyrosine mark is found at Y10, Y14, and Y15. Cystine bridges form between C20–C269 and C101–C178. A helical transmembrane segment spans residues 31-58 (RLLPPLYSLVFIFGFVGNILVVLILINC). Over 59 to 68 (KRLKSMTDIY) the chain is Cytoplasmic. The helical transmembrane segment at 69–89 (LLNLAISDLLFLLTVPFWAHY) threads the bilayer. The Extracellular portion of the chain corresponds to 90-102 (AAAQWNFGNTMCQ). The chain crosses the membrane as a helical span at residues 103–124 (LLTGLYFIGFFSGIFFIILLTI). At 125-141 (DRYLAIVHAVFALKART) the chain is on the cytoplasmic side. A helical membrane pass occupies residues 142-166 (VTFGVVTSVITWVVAVFASLPGIIF). Residues 167-198 (TRYQREGLHYTCSSHFPYSQYQFWKNFQTLKI) are Extracellular-facing. A helical membrane pass occupies residues 199–218 (VILGLVLPLLVMVICYSGIL). The Cytoplasmic segment spans residues 219 to 235 (KTLLRCRNEKKRHRAVR). Residues 236–260 (LIFTIMIVYFLFWAPYNIVLLLNTF) traverse the membrane as a helical segment. Residues 261 to 277 (QEFFGLNNCSSSNRLDQ) are Extracellular-facing. A helical transmembrane segment spans residues 278-301 (AMQVTETLGMTHCCINPIIYAFVG). At 302–352 (EKFRNYLLVFFQKHIAKRFCKCCSIFQQEAPERASSVYTRSTGEQETSVGL) the chain is on the cytoplasmic side. S-palmitoyl cysteine attachment occurs at residues C321, C323, and C324. Phosphoserine; by BARK1 is present on residues S336, S337, S342, and S349.

This sequence belongs to the G-protein coupled receptor 1 family. Interacts with PRAF2. Efficient ligand binding to CCL3/MIP-1alpha and CCL4/MIP-1beta requires sulfation, O-glycosylation and sialic acid modifications. Glycosylation on Ser-6 is required for efficient binding of CCL4. Interacts with GRK2. Interacts with ARRB1 and ARRB2. Interacts with CNIH4. Interacts with S100A4; this interaction stimulates T-lymphocyte chemotaxis. Post-translationally, sulfated on at least 2 of the N-terminal tyrosines. Sulfation is required for efficient binding of the chemokines, CCL3 and CCL4. In terms of processing, palmitoylation in the C-terminal is important for cell surface expression. Phosphorylation on serine residues in the C-terminal is stimulated by binding CC chemokines especially by APO-RANTES. Post-translationally, O-glycosylated, but not N-glycosylated. Ser-6 appears to be the major site even if Ser-7 may be also O-glycosylated. Also sialylated glycans present which contribute to chemokine binding. Thr-16 and Ser-17 may also be glycosylated and, if so, with small moieties such as a T-antigen.

It localises to the cell membrane. Its function is as follows. Receptor for a number of inflammatory CC-chemokines including CCL3/MIP-1-alpha, CCL4/MIP-1-beta and RANTES and subsequently transduces a signal by increasing the intracellular calcium ion level. May play a role in the control of granulocytic lineage proliferation or differentiation. Participates in T-lymphocyte migration to the infection site by acting as a chemotactic receptor. The polypeptide is C-C chemokine receptor type 5 (CCR5) (Erythrocebus patas (Red guenon)).